The following is a 310-amino-acid chain: Olfactory receptor 8I2 (310 aa).

At methionine 1–valine 25 the chain is on the extracellular side. N-linked (GlcNAc...) asparagine glycosylation occurs at asparagine 5. A helical membrane pass occupies residues serine 26–isoleucine 46. Topologically, residues threonine 47–glutamine 54 are cytoplasmic. A helical transmembrane segment spans residues leucine 55–serine 75. The Extracellular portion of the chain corresponds to threonine 76 to valine 99. Residues cysteine 97 and cysteine 188 are joined by a disulfide bond. A helical transmembrane segment spans residues glutamine 100 to tyrosine 120. Over asparagine 121–lysine 139 the chain is Cytoplasmic. Residues valine 140–valine 160 form a helical membrane-spanning segment. The Extracellular segment spans residues tryptophan 161–methionine 196. Residues valine 197–threonine 216 form a helical membrane-spanning segment. At tyrosine 217–alanine 236 the chain is on the cytoplasmic side. A helical membrane pass occupies residues phenylalanine 237 to threonine 257. Topologically, residues tyrosine 258–alanine 270 are extracellular. A helical transmembrane segment spans residues glutamine 271–leucine 291. Residues arginine 292 to proline 310 are Cytoplasmic-facing.

It belongs to the G-protein coupled receptor 1 family.

It localises to the cell membrane. Its function is as follows. Odorant receptor. The protein is Olfactory receptor 8I2 (OR8I2) of Homo sapiens (Human).